Reading from the N-terminus, the 294-residue chain is Cytidine deaminase (294 aa).

CMP/dCMP-type deaminase domains are found at residues 48-168 (DEDA…FGPK) and 186-294 (LTGD…VLLA). 89 to 91 (NME) contributes to the substrate binding site. Position 102 (histidine 102) interacts with Zn(2+). The Proton donor role is filled by glutamate 104. Cysteine 129 and cysteine 132 together coordinate Zn(2+).

The protein belongs to the cytidine and deoxycytidylate deaminase family. As to quaternary structure, homodimer. Requires Zn(2+) as cofactor.

It carries out the reaction cytidine + H2O + H(+) = uridine + NH4(+). The enzyme catalyses 2'-deoxycytidine + H2O + H(+) = 2'-deoxyuridine + NH4(+). This enzyme scavenges exogenous and endogenous cytidine and 2'-deoxycytidine for UMP synthesis. This Escherichia coli O139:H28 (strain E24377A / ETEC) protein is Cytidine deaminase.